The sequence spans 722 residues: Neprilysin-1 (722 aa).

The N-terminal stretch at 1-17 (MAVALLVALCVVSSRMA) is a signal peptide. A Peptidase M13 domain is found at 32 to 722 (VCNSPVCQKA…MNPTHKCLLW (691 aa)). 5 disulfides stabilise this stretch: Cys-33-Cys-38, Cys-56-Cys-707, Cys-64-Cys-667, Cys-120-Cys-378, and Cys-589-Cys-719. N-linked (GlcNAc...) asparagine glycans are attached at residues Asn-100, Asn-184, Asn-207, and Asn-424. His-552 contributes to the Zn(2+) binding site. Residue Glu-553 is part of the active site. Residue His-556 participates in Zn(2+) binding. An N-linked (GlcNAc...) asparagine glycan is attached at Asn-609. A Zn(2+)-binding site is contributed by Glu-614. Asp-618 (proton donor) is an active-site residue.

Belongs to the peptidase M13 family. Zn(2+) serves as cofactor. Post-translationally, contains 5 disulfide bonds. As to expression, expressed by the venom gland.

It is found in the secreted. In Trittame loki (Brush-footed trapdoor spider), this protein is Neprilysin-1.